A 129-amino-acid polypeptide reads, in one-letter code: NADH-quinone oxidoreductase subunit A (129 aa).

A run of 3 helical transmembrane segments spans residues 14–34 (LAIH…VAAW), 67–87 (FLIA…FAWA), and 95–115 (WLGL…LVYL).

It belongs to the complex I subunit 3 family. In terms of assembly, NDH-1 is composed of 14 different subunits. Subunits NuoA, H, J, K, L, M, N constitute the membrane sector of the complex.

The protein localises to the cell inner membrane. It carries out the reaction a quinone + NADH + 5 H(+)(in) = a quinol + NAD(+) + 4 H(+)(out). Its function is as follows. NDH-1 shuttles electrons from NADH, via FMN and iron-sulfur (Fe-S) centers, to quinones in the respiratory chain. The immediate electron acceptor for the enzyme in this species is believed to be ubiquinone. Couples the redox reaction to proton translocation (for every two electrons transferred, four hydrogen ions are translocated across the cytoplasmic membrane), and thus conserves the redox energy in a proton gradient. The chain is NADH-quinone oxidoreductase subunit A from Rhodopseudomonas palustris (strain BisB5).